The chain runs to 345 residues: Dihydroorotate dehydrogenase (quinone) (345 aa).

FMN contacts are provided by residues 65–69 (AGLDK) and T89. K69 is a binding site for substrate. 114–118 (NRLGF) serves as a coordination point for substrate. 2 residues coordinate FMN: N146 and N179. N179 lines the substrate pocket. Residue S182 is the Nucleophile of the active site. N184 lines the substrate pocket. FMN-binding residues include K224 and T252. Residue 253-254 (NT) participates in substrate binding. FMN is bound by residues G275, G304, and 325 to 326 (YT).

It belongs to the dihydroorotate dehydrogenase family. Type 2 subfamily. Monomer. FMN serves as cofactor.

The protein localises to the cell membrane. It catalyses the reaction (S)-dihydroorotate + a quinone = orotate + a quinol. Its pathway is pyrimidine metabolism; UMP biosynthesis via de novo pathway; orotate from (S)-dihydroorotate (quinone route): step 1/1. Catalyzes the conversion of dihydroorotate to orotate with quinone as electron acceptor. The chain is Dihydroorotate dehydrogenase (quinone) from Leptothrix cholodnii (strain ATCC 51168 / LMG 8142 / SP-6) (Leptothrix discophora (strain SP-6)).